Reading from the N-terminus, the 30-residue chain is M-poneritoxin-Nc3a (30 aa).

The protein belongs to the ponericin-G family. In terms of tissue distribution, expressed by the venom gland.

It localises to the secreted. It is found in the target cell membrane. Membrane-perturbating peptide with multiple activities. It is insecticidal, since it induces contractile paralysis in insects (L.cuprina) during several hours and death after 24 hours. It shows a relatively strong and broad-spectrum antibacterial activity against both Gram-positive and Gram-negative bacteria (MIC&lt;20 uM). It is also antiparasitic, since it potently inhibits the larval development of the major pathogenic nematode of ruminants (H.contortus, IC(50)=5.6 uM) and reduces the motility of adult males of the other nematode B.malayi. It also shows cytotoxic activity against HEK293 cells (EC(50)=5-7 uM) but does not induce hemolysis in human erythrocytes. In addition, it causes a moderate increase in intracellular calcium concentration on neuronal and epithelial cell lines, which supports a non-specific membrane perturbation mechanism of action. In vivo, it induces pain by intraplantar injection into mice, suggesting a defensive function against vertebrate predators. The protein is M-poneritoxin-Nc3a of Neoponera commutata (Large hunting ant).